The primary structure comprises 545 residues: E3 ubiquitin-protein ligase ipaH9.8 (545 aa).

An interaction with target proteins region spans residues Met-1–Met-242. 8 LRR repeats span residues Asn-57–Ala-77, Gln-78–Leu-99, Lys-100–Pro-117, Ala-118–Leu-139, Leu-140–Gln-157, Ala-158–Asn-179, Val-182–Leu-203, and Asn-205–Thr-228. Residues Ser-243–Leu-250 form a linker region. An E3 ubiquitin-protein ligase catalytic domain region spans residues His-251–Ser-545. Positions Pro-253–Ser-545 constitute an NEL domain. Cys-337 (glycyl thioester intermediate) is an active-site residue.

Belongs to the LRR-containing bacterial E3 ligase family. In terms of assembly, also interacts with human and mouse U2AF1 (U2AF35). Post-translationally, ubiquitinated in the presence of host E1 ubiquitin-activating enzyme, E2 ubiquitin-conjugating enzyme and ubiquitin.

It localises to the secreted. The protein resides in the host cytoplasm. It is found in the host nucleus. The catalysed reaction is S-ubiquitinyl-[E2 ubiquitin-conjugating enzyme]-L-cysteine + [acceptor protein]-L-lysine = [E2 ubiquitin-conjugating enzyme]-L-cysteine + N(6)-ubiquitinyl-[acceptor protein]-L-lysine.. With respect to regulation, exists in an autoinhibited state in the absence of substrate protein, due to interactions of the leucine-rich repeats with NEL domain. Is activated upon binding to a substrate protein. Functionally, effector E3 ubiquitin ligase that interferes with host's ubiquitination pathway and modulates the acute inflammatory responses, thus facilitating bacterial colonization within the host cell. Interacts with IKBKG (NEMO) and TNIP1 (ABIN-1), a ubiquitin-binding adapter protein, which results in TNIP1-dependent 'Lys-27'-linked polyubiquitination of IKBKG. Consequently, polyubiquitinated IKBKG undergoes proteasome-dependent degradation, which perturbs NF-kappa-B activation during bacterial infection. Mediates polyubiquitination of host U2AF1, leading to its proteasomal degradation. Catalyzes 'Lys-48'-linked polyubiquitination and subsequent degradation of a subset of host guanylate-binding proteins (GBP1, GBP2, GBP4 and GBP6), thereby suppressing host cell defense. In contrast, host GBP3 and GBP7 are not ubiquitinated by IpaH9.8. Uses UBE2D2 (UBCH5B) as an E2 ubiquitin-conjugating enzyme. This chain is E3 ubiquitin-protein ligase ipaH9.8 (ipaH9.8), found in Shigella flexneri serotype X (strain 2002017).